Here is a 239-residue protein sequence, read N- to C-terminus: UDP-2,3-diacylglucosamine hydrolase (239 aa).

Positions 8, 10, 41, 78, and 113 each coordinate Mn(2+). 78 to 79 (NR) serves as a coordination point for substrate. Substrate-binding residues include Asp121, Ser159, Asn163, Lys166, and His194. Mn(2+) is bound by residues His194 and His196.

Belongs to the LpxH family. Mn(2+) is required as a cofactor.

It is found in the cell inner membrane. The catalysed reaction is UDP-2-N,3-O-bis[(3R)-3-hydroxytetradecanoyl]-alpha-D-glucosamine + H2O = 2-N,3-O-bis[(3R)-3-hydroxytetradecanoyl]-alpha-D-glucosaminyl 1-phosphate + UMP + 2 H(+). Its pathway is glycolipid biosynthesis; lipid IV(A) biosynthesis; lipid IV(A) from (3R)-3-hydroxytetradecanoyl-[acyl-carrier-protein] and UDP-N-acetyl-alpha-D-glucosamine: step 4/6. In terms of biological role, hydrolyzes the pyrophosphate bond of UDP-2,3-diacylglucosamine to yield 2,3-diacylglucosamine 1-phosphate (lipid X) and UMP by catalyzing the attack of water at the alpha-P atom. Involved in the biosynthesis of lipid A, a phosphorylated glycolipid that anchors the lipopolysaccharide to the outer membrane of the cell. The sequence is that of UDP-2,3-diacylglucosamine hydrolase from Shewanella sp. (strain ANA-3).